Consider the following 477-residue polypeptide: Methylenetetrahydrofolate--tRNA-(uracil-5-)-methyltransferase TrmFO (477 aa).

14–19 (GGGLAG) contacts FAD.

It belongs to the MnmG family. TrmFO subfamily. It depends on FAD as a cofactor.

Its subcellular location is the cytoplasm. The catalysed reaction is uridine(54) in tRNA + (6R)-5,10-methylene-5,6,7,8-tetrahydrofolate + NADH + H(+) = 5-methyluridine(54) in tRNA + (6S)-5,6,7,8-tetrahydrofolate + NAD(+). It catalyses the reaction uridine(54) in tRNA + (6R)-5,10-methylene-5,6,7,8-tetrahydrofolate + NADPH + H(+) = 5-methyluridine(54) in tRNA + (6S)-5,6,7,8-tetrahydrofolate + NADP(+). Its function is as follows. Catalyzes the folate-dependent formation of 5-methyl-uridine at position 54 (M-5-U54) in all tRNAs. The sequence is that of Methylenetetrahydrofolate--tRNA-(uracil-5-)-methyltransferase TrmFO from Rhizobium johnstonii (strain DSM 114642 / LMG 32736 / 3841) (Rhizobium leguminosarum bv. viciae).